Reading from the N-terminus, the 413-residue chain is Glutamyl-tRNA reductase (413 aa).

Substrate-binding positions include 57–60 (TCNR), Ser113, 118–120 (DFE), and Gln124. Catalysis depends on Cys58, which acts as the Nucleophile. Residue 193–198 (GTGKIG) coordinates NADP(+).

It belongs to the glutamyl-tRNA reductase family. In terms of assembly, homodimer.

The catalysed reaction is (S)-4-amino-5-oxopentanoate + tRNA(Glu) + NADP(+) = L-glutamyl-tRNA(Glu) + NADPH + H(+). It participates in porphyrin-containing compound metabolism; protoporphyrin-IX biosynthesis; 5-aminolevulinate from L-glutamyl-tRNA(Glu): step 1/2. Functionally, catalyzes the NADPH-dependent reduction of glutamyl-tRNA(Glu) to glutamate 1-semialdehyde (GSA). The polypeptide is Glutamyl-tRNA reductase (Flavobacterium psychrophilum (strain ATCC 49511 / DSM 21280 / CIP 103535 / JIP02/86)).